A 531-amino-acid polypeptide reads, in one-letter code: MRLHLAAILILCIEHVTKAVAQGMPISPCPKVFQYRFDGSEWFGLMAVRSPDGHQPLHIRVTLSMRGKPTTYTQNYLGEIELLTRGKFTHNAPVLYKIRFPKHHFPPKLLLMSANNHVICFGSGEHSIFMTQIQLEHIRKLSFIPDKKSSLLLDPEEEEVRKTDDKPPSTPHIQFKKKPFAQAPKEICGRIDRDLDFHLSQRTESLHVAIGEPKSSDGITSPVFVDDDEDDVLEHQFVDESEAEAIESDSADSLPSITRGSWPWLAAIYVNNLTSLDFQCGGSLVSARVVISSAHCFKLFNKRYTSNEVLVFLGRHNLKNWNEEGSLAAPVDGIYIHPDFNSQLSSYDADIAVIILKDEVRFNTFIRPACLWSGSSKTEYIVGERGIVIGWSFDRTNRTRDQKLSSELPGKKSTDASAPKVVKAPIVGNAECFRANAHFRSLSSNRTFCAGIQAEERDTHQSGASIYTGISGAGLFIRRNNRWMLRGTVSAALPAVETPDAESSHKLCCKNQYIIYADVAKFLDWITAFVI.

An N-terminal signal peptide occupies residues 1–19; sequence MRLHLAAILILCIEHVTKA. Residues 155–174 are disordered; the sequence is PEEEEVRKTDDKPPSTPHIQ. Residues 246 to 531 form the Peptidase S1 domain; that stretch reads IESDSADSLP…FLDWITAFVI (286 aa). Asparagine 272 carries N-linked (GlcNAc...) asparagine glycosylation. An intrachain disulfide couples cysteine 280 to cysteine 296. Catalysis depends on charge relay system residues histidine 295 and aspartate 350. Residues asparagine 397 and asparagine 445 are each glycosylated (N-linked (GlcNAc...) asparagine). Residues cysteine 432 and cysteine 449 are joined by a disulfide bond. The active-site Charge relay system is serine 471.

The protein belongs to the peptidase S1 family. Proteolytically activated by the protease ndl. Expression begins in previtellogenic stages and is seen in germline-derived nurse cells of the germarium. Expression continues throughout oogenesis with transcripts from the nurse cells accumulating in the oocytes. Most abundant in the ovaries, the level of protein decreases from the moment of egg laying and is essentially gone by 4 hours.

It is found in the secreted. Component of the extracellular signaling pathway that establishes the dorsal-ventral pathway of the embryo. A protease cascade involving ndl, gd, snk and ea results in activation of the spz Toll receptor ligand; acts downstream of ndl but upstream of snk and ea. Activation of ea requires activation of the ndl-gd-snk protease cascade and sulfation of a vitelline membrane component by pip. Localized activation of the Toll receptor in the ventral region of the embryo defines cell identities along the dorsal-ventral continuum. In Drosophila melanogaster (Fruit fly), this protein is Serine protease gd.